The chain runs to 323 residues: Acetyl-coenzyme A carboxylase carboxyl transferase subunit alpha (323 aa).

The CoA carboxyltransferase C-terminal domain maps to 39-293 (RLAGKSQQLT…KRSLAESLRQ (255 aa)).

Belongs to the AccA family. In terms of assembly, acetyl-CoA carboxylase is a heterohexamer composed of biotin carboxyl carrier protein (AccB), biotin carboxylase (AccC) and two subunits each of ACCase subunit alpha (AccA) and ACCase subunit beta (AccD).

The protein localises to the cytoplasm. The enzyme catalyses N(6)-carboxybiotinyl-L-lysyl-[protein] + acetyl-CoA = N(6)-biotinyl-L-lysyl-[protein] + malonyl-CoA. It participates in lipid metabolism; malonyl-CoA biosynthesis; malonyl-CoA from acetyl-CoA: step 1/1. Component of the acetyl coenzyme A carboxylase (ACC) complex. First, biotin carboxylase catalyzes the carboxylation of biotin on its carrier protein (BCCP) and then the CO(2) group is transferred by the carboxyltransferase to acetyl-CoA to form malonyl-CoA. The protein is Acetyl-coenzyme A carboxylase carboxyl transferase subunit alpha of Cupriavidus metallidurans (strain ATCC 43123 / DSM 2839 / NBRC 102507 / CH34) (Ralstonia metallidurans).